A 398-amino-acid chain; its full sequence is Aspartic protease 3 (398 aa).

The N-terminal stretch at 1–17 (MSGRVFLLLALVALASA) is a signal peptide. A propeptide spans 18–55 (IQRIKLEKRTYTREQYKFGSIQEHLKAKYVPGYIPNKD) (removed in mature form). The Peptidase A1 domain maps to 69 to 392 (YYGPVTIGTP…DHGNKRVGFA (324 aa)). Residue Asp87 is part of the active site. Cys100 and Cys107 are joined by a disulfide. Residue Asp279 is part of the active site. Residues Cys313 and Cys351 are joined by a disulfide bond. Residue Asn321 is glycosylated (N-linked (GlcNAc...) asparagine).

The protein belongs to the peptidase A1 family. As to expression, highly expressed in intestine and to a lower extent in body wall muscles, hypodermis and neurons.

Its subcellular location is the cytoplasm. It localises to the lysosome. It is found in the secreted. Its function is as follows. Aspartic protease. Part of the necrosis cell death pathway. Involved in neuronal cell degeneration. Involved in heat stress response. In Caenorhabditis elegans, this protein is Aspartic protease 3.